A 349-amino-acid polypeptide reads, in one-letter code: N-acetyltaurine hydrolase (349 aa).

Positions 26, 28, 169, 201, 230, and 298 each coordinate a divalent metal cation.

Belongs to the metallo-dependent hydrolases superfamily. Phosphotriesterase family. A divalent metal cation is required as a cofactor.

The protein resides in the cytoplasm. It localises to the cytosol. It catalyses the reaction N-acetyltaurine + H2O = taurine + acetate. It carries out the reaction N-propanoyltaurine + H2O = propanoate + taurine. The catalysed reaction is N-acetyl-L-methionine + H2O = L-methionine + acetate. The enzyme catalyses N-acetyl-L-isoleucine + H2O = L-isoleucine + acetate. It catalyses the reaction N-acetyl-L-leucine + H2O = L-leucine + acetate. It carries out the reaction N-acetyl-L-valine + H2O = L-valine + acetate. In terms of biological role, N-acetyltaurine hydrolase that regulates feeding by catalyzing the hydrolysis of N-acetyltaurine into taurine and acetate. N-acetyltaurine has anorexigenic and anti-obesity effects that are dependent on GFRAL receptor and GDF15. PTER also acts on other N-acetyl amino acids (Met, Ile, Leu, Val) and N-propionyltaurine, but at lower rates. The polypeptide is N-acetyltaurine hydrolase (Homo sapiens (Human)).